A 608-amino-acid polypeptide reads, in one-letter code: Mitogen-activated protein kinase kinase kinase 1 (608 aa).

A compositionally biased stretch (basic residues) spans 1 to 13 (MDRILARMKKSTG). The segment at 1 to 20 (MDRILARMKKSTGRRGGDKN) is disordered. The segment at 1–325 (MDRILARMKK…VSNTSPIYPD (325 aa)) is regulatory region. Ser62 carries the post-translational modification Phosphoserine. The tract at residues 192–234 (MERTPTIVKSKGYLVPNNVVAVGVGVGGGIKGLRPPVLKPPPA) is binding with MPK4. Disordered regions lie at residues 228-247 (VLKP…GSSW) and 256-287 (SETV…EAEE). A compositionally biased stretch (acidic residues) spans 271 to 287 (DGCDEEEGKEEEAEAEE). One can recognise a Protein kinase domain in the interval 333-587 (WQKGQLLGRG…AAELLNHPFV (255 aa)). Residues 339–347 (LGRGSFGSV) and Lys361 each bind ATP. Catalysis depends on Asp456, which acts as the Proton acceptor. Residue Ser603 is modified to Phosphoserine.

The protein belongs to the protein kinase superfamily. STE Ser/Thr protein kinase family. MAP kinase kinase kinase subfamily. Interacts with MKK1, MMK2 and MPK4. May form a ternary complex composed of MEKK1 and MKK1/MKK2 and MPK4. Interacts with RACK1A, RACK1B and RACK1C. Binds to CRLK1. Post-translationally, phosphorylated by CRLK1 in response to cold.

Its subcellular location is the cell membrane. The protein resides in the endosome. The enzyme catalyses L-seryl-[protein] + ATP = O-phospho-L-seryl-[protein] + ADP + H(+). It carries out the reaction L-threonyl-[protein] + ATP = O-phospho-L-threonyl-[protein] + ADP + H(+). Its activity is regulated as follows. Activated by cold via CRLK1-mediated phosphorylation and leading to elevated kinase activity towards MKK2. In terms of biological role, the MEKK1, MKK1/MKK2 and MPK4 function in a signaling pathway that modulates the expression of genes responding to biotic and abiotic stresses and also plays an important role in pathogen defense by negatively regulating innate immunity. Involved in the innate immune MAP kinase signaling cascade (MEKK1, MKK4/MKK5 and MPK3/MPK6) downstream of bacterial flagellin receptor FLS2. May be involved in the cold and salinity stress-mediated MAP kinase signaling cascade (MEKK1, MKK1/MKK2 and MPK4/MPK6). Activates by phosphorylation the downstream MKK2, MKK4 and MKK5 in a calcium-dependent manner. The polypeptide is Mitogen-activated protein kinase kinase kinase 1 (MEKK1) (Arabidopsis thaliana (Mouse-ear cress)).